Here is a 122-residue protein sequence, read N- to C-terminus: Large ribosomal subunit protein uL14 (122 aa).

The protein belongs to the universal ribosomal protein uL14 family. Part of the 50S ribosomal subunit. Forms a cluster with proteins L3 and L19. In the 70S ribosome, L14 and L19 interact and together make contacts with the 16S rRNA in bridges B5 and B8.

Binds to 23S rRNA. Forms part of two intersubunit bridges in the 70S ribosome. This is Large ribosomal subunit protein uL14 from Beutenbergia cavernae (strain ATCC BAA-8 / DSM 12333 / CCUG 43141 / JCM 11478 / NBRC 16432 / NCIMB 13614 / HKI 0122).